A 304-amino-acid polypeptide reads, in one-letter code: Homoserine O-succinyltransferase (304 aa).

The Acyl-thioester intermediate role is filled by Cys142. 2 residues coordinate substrate: Lys163 and Ser192. His235 acts as the Proton acceptor in catalysis. Glu237 is an active-site residue. Residue Arg249 participates in substrate binding.

The protein belongs to the MetA family.

It is found in the cytoplasm. The catalysed reaction is L-homoserine + succinyl-CoA = O-succinyl-L-homoserine + CoA. Its pathway is amino-acid biosynthesis; L-methionine biosynthesis via de novo pathway; O-succinyl-L-homoserine from L-homoserine: step 1/1. In terms of biological role, transfers a succinyl group from succinyl-CoA to L-homoserine, forming succinyl-L-homoserine. The sequence is that of Homoserine O-succinyltransferase from Blochmanniella pennsylvanica (strain BPEN).